Here is a 48-residue protein sequence, read N- to C-terminus: uncharacterized protein (48 aa).

This is an uncharacterized protein from Escherichia coli (Bacteriophage HK022).